The chain runs to 107 residues: Apolipoprotein E (107 aa).

A run of 5 repeats spans residues 11–32 (ALMDETMKELKAYKSELEEQLS), 33–54 (PVAEETRARLSKELQAAQARLG), 55–76 (ADMEDVRSRLAQYRSEVQAMLG), 77–98 (QSTDELRARLASHLRKLRKRLL), and 99–107 (RDVDDLQKR). The tract at residues 11–107 (ALMDETMKEL…LRDVDDLQKR (97 aa)) is 5 X 22 AA approximate tandem repeats. Position 74 is a methionine sulfoxide (Met74). A Phosphoserine modification is found at Ser78. An LDL and other lipoprotein receptors binding region spans residues 89 to 99 (HLRKLRKRLLR). A heparin-binding site is contributed by 93 to 96 (LRKR).

Belongs to the apolipoprotein A1/A4/E family. In terms of assembly, homotetramer. May interact with ABCA1; functionally associated with ABCA1 in the biogenesis of HDLs. May interact with APP/A4 amyloid-beta peptide; the interaction is extremely stable in vitro but its physiological significance is unclear. May interact with MAPT. May interact with MAP2. In the cerebrospinal fluid, interacts with secreted SORL1. Interacts with PMEL; this allows the loading of PMEL luminal fragment on ILVs to induce fibril nucleation. Post-translationally, APOE exists as multiple glycosylated and sialylated glycoforms within cells and in plasma. The extent of glycosylation and sialylation are tissue and context specific. Glycated in plasma VLDL. In terms of processing, phosphorylated by FAM20C in the extracellular medium.

It is found in the secreted. It localises to the extracellular space. The protein resides in the extracellular matrix. The protein localises to the extracellular vesicle. Its subcellular location is the endosome. It is found in the multivesicular body. Its function is as follows. APOE is an apolipoprotein, a protein associating with lipid particles, that mainly functions in lipoprotein-mediated lipid transport between organs via the plasma and interstitial fluids. APOE is a core component of plasma lipoproteins and is involved in their production, conversion and clearance. Apolipoproteins are amphipathic molecules that interact both with lipids of the lipoprotein particle core and the aqueous environment of the plasma. As such, APOE associates with chylomicrons, chylomicron remnants, very low density lipoproteins (VLDL) and intermediate density lipoproteins (IDL) but shows a preferential binding to high-density lipoproteins (HDL). It also binds a wide range of cellular receptors including the LDL receptor/LDLR, the LDL receptor-related proteins LRP1, LRP2 and LRP8 and the very low-density lipoprotein receptor/VLDLR that mediate the cellular uptake of the APOE-containing lipoprotein particles. Finally, APOE also has a heparin-binding activity and binds heparan-sulfate proteoglycans on the surface of cells, a property that supports the capture and the receptor-mediated uptake of APOE-containing lipoproteins by cells. A main function of APOE is to mediate lipoprotein clearance through the uptake of chylomicrons, VLDLs, and HDLs by hepatocytes. APOE is also involved in the biosynthesis by the liver of VLDLs as well as their uptake by peripheral tissues ensuring the delivery of triglycerides and energy storage in muscle, heart and adipose tissues. By participating in the lipoprotein-mediated distribution of lipids among tissues, APOE plays a critical role in plasma and tissues lipid homeostasis. APOE is also involved in two steps of reverse cholesterol transport, the HDLs-mediated transport of cholesterol from peripheral tissues to the liver, and thereby plays an important role in cholesterol homeostasis. First, it is functionally associated with ABCA1 in the biogenesis of HDLs in tissues. Second, it is enriched in circulating HDLs and mediates their uptake by hepatocytes. APOE also plays an important role in lipid transport in the central nervous system, regulating neuron survival and sprouting. This Saimiri sciureus (Common squirrel monkey) protein is Apolipoprotein E (APOE).